A 1501-amino-acid polypeptide reads, in one-letter code: LDQSSRYADLSLDEDTLIRNGKHVLVAYIMKPKAGYDYLATAAHFAAESSTGTNVNVCTTDDFTKSVDALVYYIDPDNEEMKIAYPTLLFDRNITDGRGMMCSFLTLAIGNNQGMGDVEYGKIYDFYLPPAFLRLYDGPSVNVEDMWRILGRGTTNGGLVVGTIIKPKLGLQPKPFGEACYSFWQGGDFIKNDEPQGNQVFCQMNECIPEVVKAMRACVKETGSSKLFSANITADDPEEMIARGKYIMSQFGPLSENCAFLVDGYVAGGTAVTCCRRNFPKQFLHYHRAGHGSVTSPQTQRGYTAFVHTKISRVIGASGIHVGTMSFGKMEGDASDKNIAYMLQDDEADGPYYRQEWQGMKETTPIISGGMNALRLPAFFENLGHSNVILTAGGGSFGHKDGPKIGAISCRQGEEAWKQWKAGQFGNISLSDGVIEYAKTHEEIKGAFLTFQKDADQIYPGWKEKLGYTGESSVQAASFDWAKRASAAAFVGASVAPAKKENVVARQALDQSSRYADLSLDEDTLIRNGKHVLVAYIMKPKAGYDYLATAAHFAAESSTGTNVNVCTTDDFTKSVDALVYYIDPDNEEMKIAYPTLLFDRNITDGRGMMCSFLTLAIGNNQGMGDVEYGKIYDFYLPPAFLRLYDGPSVNVEDMWRILGRGTTNGGLVVGTIIKPKLGLQPKPFGEACYSFWQGGDFIKNDEPQGNQVFCQMNECIPEVVKAMRACVKETGSSKLFSANITADDPEEMIARGKYIMSQFGPLSENCAFLVDGYVAGGTAVTCCRRNFPKQFLHYHRAGHGSVTSPQTQRGYTAFVHTKISRVIGASGIHVGTMSFGKMEGDASDKNIAYMLQDDEADGPYYRQEWQGMKETTPIISGGMNALRLPAFFENLGHSNVILTAGGGSFGHKDGPKIGAISCRQGEEAWKQWKAGQFGNISLSDGVIEYAKTHEEIKGAFLTFQKDADQIYPGWKEKLGYTGESSVQAASFDWAKRASAAAFVGASVAPAKKENVVARQALDQSSRYADLSLDEDTLIRNGKHVLVAYIMKPKAGYDYLATAAHFAAESSTGTNVNVCTTDDFTKSVDALVYYIDPDNEEMKIAYPTLLFDRNITDGRGMMCSFLTLAIGNNQGMGDVEYGKIYDFYLPPAFLRLYDGPSVNVEDMWRILGRGTTNGGLVVGTIIKPKLGLQPKPFGEACYSFWQGGDFIKNDEPQGNQVFCQMNECIPEVVKAMRACVKETGSSKLFSANITADDPEEMIARGKYIMSQFGPLSENCAFLVDGYVAGGTAVTCCRRNFPKQFLHYHRAGHGSVTSPQTQRGYTAFVHTKISRVIGASGIHVGTMSFGKMEGDASDKNIAYMLQDDEADGPYYRQEWQGMKETTPIISGGMNALRLPAFFENLGHSKVILTAGGGSFGHKDGPKIGAISCRQGEEAWKQWKAGQFGNISLSDGVIEYAKTHEEIKGAFLTFQKDADQIYPGWKEKLGYTGESSVQAASFDWAKRA.

Asparagine 111 provides a ligand contact to substrate. The active-site Proton acceptor is the lysine 166. Lysine 168 contacts substrate. Mg(2+) is bound by residues lysine 191, aspartate 193, and glutamate 194. Residue lysine 191 is modified to N6-carboxylysine. Residue histidine 287 is the Proton acceptor of the active site. Positions 288, 321, and 368 each coordinate substrate. The propeptide at 486 to 508 (SAAAFVGASVAPAKKENVVARQA) is linker. Substrate is bound at residue asparagine 619. The active-site Proton acceptor is lysine 674. Lysine 676 lines the substrate pocket. 3 residues coordinate Mg(2+): lysine 699, aspartate 701, and glutamate 702. N6-carboxylysine is present on lysine 699. Residue histidine 795 is the Proton acceptor of the active site. Arginine 796, histidine 829, and serine 876 together coordinate substrate. Residues 994–1016 (SAAAFVGASVAPAKKENVVARQA) constitute a propeptide, linker. Asparagine 1127 is a binding site for substrate. The active-site Proton acceptor is lysine 1182. Residue lysine 1184 coordinates substrate. Residues lysine 1207, aspartate 1209, and glutamate 1210 each coordinate Mg(2+). An N6-carboxylysine modification is found at lysine 1207. The active-site Proton acceptor is histidine 1303. Substrate contacts are provided by arginine 1304, histidine 1337, and serine 1384.

This sequence belongs to the RuBisCO large chain family. Type II subfamily. In terms of assembly, homodimer. Requires Mg(2+) as cofactor.

The protein resides in the plastid. It localises to the chloroplast. It carries out the reaction 2 (2R)-3-phosphoglycerate + 2 H(+) = D-ribulose 1,5-bisphosphate + CO2 + H2O. The catalysed reaction is D-ribulose 1,5-bisphosphate + O2 = 2-phosphoglycolate + (2R)-3-phosphoglycerate + 2 H(+). Functionally, ruBisCO catalyzes two reactions: the carboxylation of D-ribulose 1,5-bisphosphate, the primary event in carbon dioxide fixation, as well as the oxidative fragmentation of the pentose substrate. Both reactions occur simultaneously and in competition at the same active site. This chain is Ribulose bisphosphate carboxylase (rbcL), found in Symbiodinium sp. (Dinoflagellate).